A 1059-amino-acid polypeptide reads, in one-letter code: Carbamoyl phosphate synthase large chain (1059 aa).

The interval 1-401 (MPKRQDISKI…AMLKAVRSLE (401 aa)) is carboxyphosphate synthetic domain. Residues Arg-129, Arg-169, Gly-175, Gly-176, Arg-208, Ile-210, Glu-215, Gly-241, Ile-242, His-243, Gln-284, and Glu-298 each coordinate ATP. Positions 133–327 (KALMERLNEP…IAKMAAKIAV (195 aa)) constitute an ATP-grasp 1 domain. Residues Gln-284, Glu-298, and Asn-300 each contribute to the Mg(2+) site. Positions 284, 298, and 300 each coordinate Mn(2+). Positions 402–546 (IGAIGLDDIT…YATYEQENES (145 aa)) are oligomerization domain. The interval 547-929 (IISTKKSVLV…ALYKAFIASN (383 aa)) is carbamoyl phosphate synthetic domain. The ATP-grasp 2 domain occupies 671-861 (DQVIKELALP…LAQLATRVML (191 aa)). Positions 707, 746, 748, 752, 777, 778, 779, 780, 820, and 832 each coordinate ATP. Residues Gln-820, Glu-832, and Asn-834 each coordinate Mg(2+). Gln-820, Glu-832, and Asn-834 together coordinate Mn(2+). The region spanning 930–1059 (IKVPRYGNVL…SRSFTVKEMH (130 aa)) is the MGS-like domain. The tract at residues 930-1059 (IKVPRYGNVL…SRSFTVKEMH (130 aa)) is allosteric domain.

Belongs to the CarB family. As to quaternary structure, composed of two chains; the small (or glutamine) chain promotes the hydrolysis of glutamine to ammonia, which is used by the large (or ammonia) chain to synthesize carbamoyl phosphate. Tetramer of heterodimers (alpha,beta)4. It depends on Mg(2+) as a cofactor. Mn(2+) is required as a cofactor.

It carries out the reaction hydrogencarbonate + L-glutamine + 2 ATP + H2O = carbamoyl phosphate + L-glutamate + 2 ADP + phosphate + 2 H(+). The catalysed reaction is hydrogencarbonate + NH4(+) + 2 ATP = carbamoyl phosphate + 2 ADP + phosphate + 2 H(+). Its pathway is amino-acid biosynthesis; L-arginine biosynthesis; carbamoyl phosphate from bicarbonate: step 1/1. It participates in pyrimidine metabolism; UMP biosynthesis via de novo pathway; (S)-dihydroorotate from bicarbonate: step 1/3. In terms of biological role, large subunit of the glutamine-dependent carbamoyl phosphate synthetase (CPSase). CPSase catalyzes the formation of carbamoyl phosphate from the ammonia moiety of glutamine, carbonate, and phosphate donated by ATP, constituting the first step of 2 biosynthetic pathways, one leading to arginine and/or urea and the other to pyrimidine nucleotides. The large subunit (synthetase) binds the substrates ammonia (free or transferred from glutamine from the small subunit), hydrogencarbonate and ATP and carries out an ATP-coupled ligase reaction, activating hydrogencarbonate by forming carboxy phosphate which reacts with ammonia to form carbamoyl phosphate. The chain is Carbamoyl phosphate synthase large chain from Leuconostoc mesenteroides subsp. mesenteroides (strain ATCC 8293 / DSM 20343 / BCRC 11652 / CCM 1803 / JCM 6124 / NCDO 523 / NBRC 100496 / NCIMB 8023 / NCTC 12954 / NRRL B-1118 / 37Y).